A 436-amino-acid polypeptide reads, in one-letter code: MSIKWEKKDGTNEGKLTFEIAPEKIKEGLNSAFNRVKKSLNVPGFRKGKVPRQIFNKMYGEEALYQEALNDLLPEAYSNAVKEADINPVDQPQIDVESMESDAAWVLTAKVTVEPEVELGQYKDLEVTKHPTRVLKADIENELNRLQQQEAELVLKEDEPAEQGDTVVIDFEGKIDGEAFDGGKGENHSLELGSGQFIPGFEDQLVGHKAGEEVAVTVTFPEDYQAKDLAGKEAVFDTKIHEVKTKELPELDDEFAKDVDEDVATLEELKAKIKDRLKDQKVAEAKAAIQEEALDIAVENATIGEIPAVMIEDDVHRQMDNFLAGMQNQGISADMYYQLTGTSADDLHKQFEEGAEKRVKTNLVLEAIVKAEKIEPSEDEINAEIKSLAEQYQMDEAAVRSALSDDMLKHDIAVRKVVDEIADSAKQTRDAKKDEE.

The PPIase FKBP-type domain occupies 164–249 (GDTVVIDFEG…IHEVKTKELP (86 aa)).

This sequence belongs to the FKBP-type PPIase family. Tig subfamily.

It localises to the cytoplasm. It carries out the reaction [protein]-peptidylproline (omega=180) = [protein]-peptidylproline (omega=0). Functionally, involved in protein export. Acts as a chaperone by maintaining the newly synthesized protein in an open conformation. Functions as a peptidyl-prolyl cis-trans isomerase. The chain is Trigger factor from Ligilactobacillus salivarius (strain UCC118) (Lactobacillus salivarius).